Consider the following 381-residue polypeptide: Transcription termination factor 4, mitochondrial (381 aa).

The N-terminal 42 residues, 1-42 (MAAFGRQVLDWHRLIPLTWACMARQTPHLGEQRRTTASLLRK), are a transit peptide targeting the mitochondrion. 5 MTERF repeats span residues 142-172 (CVVLKKSPQLLKLPIMQMRKRSSYLQKLGLG), 177-204 (KRVLYCCPEIFTMRQQDINDTVRLLKEK), 209-239 (VQQVTKILHSCPSVLREDLGQLEYKFQYAYF), 245-270 (HPDIVKSEYLQYSLTKIKQRHIYLER), and 290-318 (LKDILRVSEAEFLARTACTSVEEFQVFKK). The dimerization with NSUN4 stretch occupies residues 310 to 327 (VEEFQVFKKLLAREEEES). The segment at 322–381 (REEEESESSTSDDKRASLDEDEDDDDEEDNDEDDNDEDDDDEDDDEAEDNDEDEDDDEEE) is disordered. Acidic residues predominate over residues 340 to 381 (DEDEDDDDEEDNDEDDNDEDDDDEDDDEAEDNDEDEDDDEEE).

Belongs to the mTERF family. In terms of assembly, heterodimer with NSUN4; this interaction may be required for NSUN4 recruitment to the mitochondrial large ribosomal subunit. The mature mitochondrial protein exists in 2 forms differing at the level of their N-terminus, one is starting at residue 43 and the other at residue 48.

It localises to the mitochondrion. Its function is as follows. Regulator of mitochondrial ribosome biogenesis and translation. Binds to mitochondrial ribosomal RNAs 16S, 12S and 7S and targets NSUN4 RNA methyltransferase to the mitochondrial large ribosomal subunit (39S). The polypeptide is Transcription termination factor 4, mitochondrial (MTERF4) (Homo sapiens (Human)).